The sequence spans 408 residues: L,D-transpeptidase 2 (408 aa).

Positions 1–34 (MPKVGIAAQAGRTRVRRAWLTALMMTAVMIGAVA) are cleaved as a signal peptide. The N-palmitoyl cysteine moiety is linked to residue C35. A lipid anchor (S-diacylglycerol cysteine) is attached at C35. Ca(2+) contacts are provided by D232, E235, and G236. A L,D-TPase catalytic domain is found at 253 to 378 (VIATADDNTK…VKRGDIVEVV (126 aa)). Residues Y318 and 331 to 332 (SG) each bind substrate. H336 serves as the catalytic Proton donor/acceptor. Catalysis depends on C354, which acts as the Nucleophile. N356 is a binding site for substrate.

In terms of assembly, monomer.

The protein resides in the cell membrane. It functions in the pathway cell wall biogenesis; peptidoglycan biosynthesis. Its activity is regulated as follows. Is irreversibly inactivated by the beta-lactams carbapenems via the formation of a covalent adduct resulting from acylation of the catalytic Cys. Functionally, generates 3-&gt;3 cross-links in peptidoglycan, catalyzing the cleavage of the mDap(3)-D-Ala(4) bond of a tetrapeptide donor stem and the formation of a bond between the carbonyl of mDap(3) of the donor stem and the side chain of mDap(3) of the acceptor stem. Is specific for donor substrates containing a stem tetrapeptide since it cannot use pentapeptide stems. Is essential for virulence in a mouse model of acute infection. The sequence is that of L,D-transpeptidase 2 (ldtB) from Mycobacterium tuberculosis (strain CDC 1551 / Oshkosh).